The chain runs to 198 residues: Large ribosomal subunit protein bL25 (198 aa).

This sequence belongs to the bacterial ribosomal protein bL25 family. CTC subfamily. In terms of assembly, part of the 50S ribosomal subunit; part of the 5S rRNA/L5/L18/L25 subcomplex. Contacts the 5S rRNA. Binds to the 5S rRNA independently of L5 and L18.

In terms of biological role, this is one of the proteins that binds to the 5S RNA in the ribosome where it forms part of the central protuberance. In Azotobacter vinelandii (strain DJ / ATCC BAA-1303), this protein is Large ribosomal subunit protein bL25.